A 456-amino-acid chain; its full sequence is Alcohol acyltransferase 17 (456 aa).

Catalysis depends on proton acceptor residues H166 and D382.

It belongs to the plant acyltransferase family. Expressed in fruit.

Its function is as follows. Involved in the biosynthesis of volatile esters which confer kiwifruit flavor. Alcohol acyl transferase that can use a wide range of alcohols as substrate to produce esters. The protein is Alcohol acyltransferase 17 of Actinidia deliciosa (Kiwi).